Here is a 306-residue protein sequence, read N- to C-terminus: Palmitoyl-protein thioesterase 1 (306 aa).

The first 27 residues, 1–27 (MASSCSRRLLAAALLPWCCAAWALGHL), serve as a signal peptide directing secretion. 3 disulfide bridges follow: Cys-45/Cys-46, Cys-96/Cys-128, and Cys-152/Cys-160. Ser-115 is a catalytic residue. N-linked (GlcNAc...) asparagine glycans are attached at residues Asn-197, Asn-212, and Asn-232. Residues Asp-233 and His-289 contribute to the active site.

It belongs to the palmitoyl-protein thioesterase family. Interacts with CLN5, ATP5F1A and ATP5F1B. In terms of processing, glycosylated. Highest level in testis and kidney, lower in heart, brain and lung and lowest in skeletal muscle.

Its subcellular location is the lysosome. The protein localises to the secreted. It localises to the golgi apparatus. The protein resides in the endoplasmic reticulum. The catalysed reaction is S-hexadecanoyl-L-cysteinyl-[protein] + H2O = L-cysteinyl-[protein] + hexadecanoate + H(+). It carries out the reaction hexadecanoyl-CoA + H2O = hexadecanoate + CoA + H(+). The enzyme catalyses S-hexadecanoyl-N-acetylcysteamine + H2O = N-acetylcysteamine + hexadecanoate + H(+). It catalyses the reaction S-hexadecanoyl-N-acetylcysteine methyl ester + H2O = N-acetylcysteine methyl ester + hexadecanoate + H(+). Functionally, has thioesterase activity against fatty acid thioesters with 14 -18 carbons, including palmitoyl-CoA, S-palmitoyl-N-acetylcysteamine, and palmitoylated proteins. In contrast to PPT2, PPT1 can hydrolyze palmitoylated proteins and palmitoylcysteine. The sequence is that of Palmitoyl-protein thioesterase 1 (Ppt1) from Mus musculus (Mouse).